Reading from the N-terminus, the 206-residue chain is Probable GTP-binding protein EngB (206 aa).

An EngB-type G domain is found at 27-201; sequence SGIEVAFAGR…EEKLNQWYSK (175 aa). Residues 35–42, 62–66, 80–83, 147–150, and 180–182 contribute to the GTP site; these read GRSNAGKS, GRTQL, DLPG, TKAD, and FSS. Residues S42 and T64 each contribute to the Mg(2+) site.

It belongs to the TRAFAC class TrmE-Era-EngA-EngB-Septin-like GTPase superfamily. EngB GTPase family. The cofactor is Mg(2+).

In terms of biological role, necessary for normal cell division and for the maintenance of normal septation. In Idiomarina loihiensis (strain ATCC BAA-735 / DSM 15497 / L2-TR), this protein is Probable GTP-binding protein EngB.